The chain runs to 1647 residues: MARNAISDDEEDHELEDDDGEPVHGDPAEHDENDDEEDDDDVGNEYENDGFIVNDEDEEEEEEEDEERKDSDEERQKKKKKRKKKDEGLDEDDYLLLQDNNVKFKKRQYKRLKKAQREQGNGQGESSDDEFDSRGGTRRSAEDKIKDRLFDDVDVDDPPDDVGDEEDLVVEEDVVGSEDEMADFIVDEDDEHGPPKRGNSKKKKYRQGSDITAMRDANEIFGDVDELLTIRKKGLASNQRMERRLEDEFEPTVLSEKYMTGNDDEIRQLDIPERMQISEESTGSPPVDEISIEEESNWIYAQLASQLRESDGTFDGRGFSVNKDDIAKFLELHHVQKLEIPFIAMYRKEQCRSLLDTGDFDGANQGKKPETKWHKVFWMIHDLDKKWLLLRKRKMALHGYYTKRYEEESRRVYDETRLNLNQYLFESVIKSLKVAETEREVDDVDSKFNLHFPPGEIGVDEGQYKRPKRKSQYSICSKAGLWEVANKFGYSAEQLGLALSLEKLVDELEDAKETPEEMAKNFVCAMFENSLAVLKGARHMAAVEISCEPSVKKYVRGIYMENAVVSTSPTADGNTVIDSFHQFSGIKWLREKPLSKFEGAQWLLIQKGEEEKLLQVTFKLPENYMNRLISDCNEHYLSVGVSKYAQLWNEQRKLILEDALHAFLLPSMEKEARSLLTSRAKSRLLSEYGQALWNKVSAGPYQKKEMDINLDEEAAPRVMACCWGPGKPPNTFVMLDSSGEVLDVLYAGSLTSRSQNVNDQQRKKSDQDRVLKFMMDHQPHVVALGAVNLSCTRLKDDIYEVIFQMVEEKPRDVGHGMDDLSIVYVDESLPRLYENSRISGEQLPQQSGNVRRAVALGRYLQNPLAMVATLCGPGREILSWKLHPLENFLQLDEKYGMVEQVMVDITNQVGIDINLAASHDWFFSPLQFISGLGPRKAASLQRSLVRAGSIFVRKDLIMHGLGKKVFVNAAGFLRIRRSGLAASSSQFIDLLDDTRIHPESYSLAQELAKDIYDEDVRGDSNDDEDAIEMAIEHVRDRPASLRKVVLDEYLASKKRENKKETYSNIIRELSCGFQDWRIPFKEPSPDEEFYMISGETEDTIAEGRIVQASVRRLQNGRAICVLDSGLTGMLMKEDFSDDGRDIVDLADQLKEGDILTCKIKSIQKQRYQVFLICKESEMRNNRHQHNQNVDAYYHEDRNSLQLVKEKARKEKELVRKHFKSRMIVHPRFQNITADQATEYLSDKDFGESIVRPSSRGLNFLTLTLKIYDGVYAHKEIAEGGKENKDITSLQCIGKTLTIGEDTFEDLDEVMDRYVDPLVSHLKTMLNYRKFRKGTKSEVDDLLRIEKGENPSRIVYCFGISHEHPGTFILSYIRSTNPHHEYIGLYPKGFKFRKRMFEDIDRLVAYFQRHIDDPLQESAPSIRSIAAKVPMRSPADHGSSGGSGWGSSQSEGGWKGNSDRSGSGRGGEYRNGGGRDGHPSGAPRPYGGRGRGRGRGRRDDMNSDRQDGNGDWGNNDTGTADGGWGNSGGGGWGSESAGKKTGGGSTGGWGSESGGNKSDGAGSWGSGSGGGGSGGWGNDSGGKKSSEDGGFGSGSGGGGSDWGNESGGKKSSADGGWGSESGGKKSDGEGGWGNEPSSRKSDGGGGGW.

Positions Met-1–Ser-209 are disordered. Positions Ser-7–Gly-20 are enriched in acidic residues. Positions Glu-21–His-30 are enriched in basic and acidic residues. Over residues Asp-31 to Glu-67 the composition is skewed to acidic residues. The segment covering Lys-103–Lys-114 has biased composition (basic residues). The span at Asp-132–Asp-151 shows a compositional bias: basic and acidic residues. The span at Asp-152 to Glu-191 shows a compositional bias: acidic residues. In terms of domain architecture, S1 motif spans Gly-1103–Lys-1174. Positions Pro-1429–Trp-1647 are disordered. Repeat copies occupy residues Gly-1443–Trp-1444 and Gly-1452–Trp-1453. The interval Gly-1443–Trp-1647 is 12 X 2 AA repeats of [WG]-[GW] repeats. The segment covering Ser-1462–Gly-1471 has biased composition (gly residues). Basic and acidic residues predominate over residues Arg-1496–Gly-1507. Repeat copies occupy residues Trp-1511–Gly-1512, Gly-1522–Trp-1523, Gly-1530–Trp-1531, Gly-1547–Trp-1548, Trp-1563–Gly-1564, and Gly-1574–Trp-1575. Composition is skewed to gly residues over residues Ala-1519–Gly-1532, Lys-1539–Ser-1552, Gly-1561–Ser-1579, and Gly-1588–Asp-1600. Tandem repeats lie at residues Trp-1601–Gly-1602, Gly-1615–Trp-1616, Gly-1630–Trp-1631, and Gly-1646–Trp-1647.

This sequence belongs to the SPT6 family. In terms of assembly, interacts (via N-terminus) with IWS1. As to expression, expressed in shoot apical meristem, leaf primordia, vasculature of young leaves, inflorescence meristem, floral meristem, young floral organs, developing ovules and anthers.

It localises to the nucleus. Functionally, transcription elongation factor that enhances the transcription elongation by RNA polymerase II (RNAPII). Plays an important role in regulating embryo apical and basal patterning during early embryogenesis, partly through negative regulation of the transcription factors PHABULOSA and PHAVOLUTA. This is Transcription elongation factor SPT6 homolog from Arabidopsis thaliana (Mouse-ear cress).